Reading from the N-terminus, the 353-residue chain is Hydrazine synthase subunit gamma (353 aa).

The first 39 residues, 1–39, serve as a signal peptide directing secretion; the sequence is MAREMRLGGKERMKTGVVKIGLVAALGVVGLISAGGVYA. Heme c is bound by residues cysteine 102, cysteine 105, and histidine 106. The Ca(2+) site is built by aspartate 118, leucine 119, glutamate 122, glycine 123, serine 126, asparagine 129, leucine 139, and proline 141. Cysteine 165, cysteine 225, cysteine 228, and histidine 229 together coordinate heme c. In terms of domain architecture, Cytochrome c spans 209 to 353; that stretch reads EAQKRGQKIF…QDLVEYLKAL (145 aa). Residues aspartate 296, serine 306, glycine 307, and threonine 308 each contribute to the Ca(2+) site. Histidine 332 provides a ligand contact to heme c.

As to quaternary structure, part of the hydrazine synthase complex that forms an elongated dimer of heterotrimers composed of one alpha, one beta and one gamma subunit. Requires heme c as cofactor.

The protein resides in the anammoxosome. The enzyme catalyses hydrazine + 3 Fe(III)-[cytochrome c] + H2O = nitric oxide + 3 Fe(II)-[cytochrome c] + NH4(+) + 2 H(+). Its pathway is nitrogen metabolism. In terms of biological role, component of the hydrazine synthase complex that catalyzes the condensation of nitric oxide (NO) with ammonium to form hydrazine. The gamma subunit catalyzes the first half-reaction, i.e. the three-electron reduction of nitric oxide to hydroxylamine; it may obtain electrons from the triheme cytochrome c kuste2854. Is involved in anaerobic ammonium oxidation (anammox), a biological process in which nitrite is used as the electron acceptor in the conversion of ammonium to dinitrogen gas (N2) and water; this bacterial process has a major role in the Earth's nitrogen cycle and has been estimated to synthesize up to 50% of the dinitrogen gas emitted into our atmosphere from the oceans. The sequence is that of Hydrazine synthase subunit gamma from Kuenenia stuttgartiensis.